Here is a 386-residue protein sequence, read N- to C-terminus: GTPase Obg (386 aa).

The Obg domain occupies 1 to 159 (MKFVDEAVIR…RSLKLELMLL (159 aa)). Residues 160-333 (ADVGLLGMPN…LSLKLVDFID (174 aa)) form the OBG-type G domain. GTP is bound by residues 166-173 (GMPNAGKS), 191-195 (FTTLV), 213-216 (DIPG), 283-286 (NKKD), and 314-316 (SAY). Positions 173 and 193 each coordinate Mg(2+). A disordered region spans residues 356–375 (KDSDSLNEDFDDSDDDDFDD). Over residues 360–375 (SLNEDFDDSDDDDFDD) the composition is skewed to acidic residues.

This sequence belongs to the TRAFAC class OBG-HflX-like GTPase superfamily. OBG GTPase family. As to quaternary structure, monomer. The cofactor is Mg(2+).

The protein localises to the cytoplasm. Functionally, an essential GTPase which binds GTP, GDP and possibly (p)ppGpp with moderate affinity, with high nucleotide exchange rates and a fairly low GTP hydrolysis rate. Plays a role in control of the cell cycle, stress response, ribosome biogenesis and in those bacteria that undergo differentiation, in morphogenesis control. In Shewanella sediminis (strain HAW-EB3), this protein is GTPase Obg.